Reading from the N-terminus, the 366-residue chain is Chorismate synthase (366 aa).

NADP(+) contacts are provided by Arg48 and Arg54. Residues 125–127 (RSS), 238–239 (NA), Gly278, 293–297 (KPTSS), and Arg319 contribute to the FMN site.

It belongs to the chorismate synthase family. Homotetramer. FMNH2 is required as a cofactor.

The catalysed reaction is 5-O-(1-carboxyvinyl)-3-phosphoshikimate = chorismate + phosphate. It functions in the pathway metabolic intermediate biosynthesis; chorismate biosynthesis; chorismate from D-erythrose 4-phosphate and phosphoenolpyruvate: step 7/7. Catalyzes the anti-1,4-elimination of the C-3 phosphate and the C-6 proR hydrogen from 5-enolpyruvylshikimate-3-phosphate (EPSP) to yield chorismate, which is the branch point compound that serves as the starting substrate for the three terminal pathways of aromatic amino acid biosynthesis. This reaction introduces a second double bond into the aromatic ring system. The protein is Chorismate synthase of Dechloromonas aromatica (strain RCB).